Here is a 400-residue protein sequence, read N- to C-terminus: Enoyl-[acyl-carrier-protein] reductase [NADH] (400 aa).

NAD(+) contacts are provided by residues glycine 48–tyrosine 53, phenylalanine 74–glutamate 75, aspartate 111–alanine 112, and leucine 139–alanine 140. Position 225 (tyrosine 225) interacts with substrate. Tyrosine 235 acts as the Proton donor in catalysis. Residues lysine 244 and valine 273 to threonine 275 each bind NAD(+).

This sequence belongs to the TER reductase family. Monomer.

The enzyme catalyses a 2,3-saturated acyl-[ACP] + NAD(+) = a (2E)-enoyl-[ACP] + NADH + H(+). The protein operates within lipid metabolism; fatty acid biosynthesis. Involved in the final reduction of the elongation cycle of fatty acid synthesis (FAS II). Catalyzes the reduction of a carbon-carbon double bond in an enoyl moiety that is covalently linked to an acyl carrier protein (ACP). The polypeptide is Enoyl-[acyl-carrier-protein] reductase [NADH] (Burkholderia vietnamiensis (strain G4 / LMG 22486) (Burkholderia cepacia (strain R1808))).